Consider the following 419-residue polypeptide: 5-methylthioadenosine/S-adenosylhomocysteine deaminase (419 aa).

Zn(2+) is bound by residues His-58 and His-60. Substrate-binding residues include Glu-87 and His-179. Residue His-206 participates in Zn(2+) binding. 2 residues coordinate substrate: Glu-209 and Asp-294. Asp-294 is a binding site for Zn(2+).

This sequence belongs to the metallo-dependent hydrolases superfamily. MTA/SAH deaminase family. It depends on Zn(2+) as a cofactor.

It catalyses the reaction S-adenosyl-L-homocysteine + H2O + H(+) = S-inosyl-L-homocysteine + NH4(+). The catalysed reaction is S-methyl-5'-thioadenosine + H2O + H(+) = S-methyl-5'-thioinosine + NH4(+). Functionally, catalyzes the deamination of 5-methylthioadenosine and S-adenosyl-L-homocysteine into 5-methylthioinosine and S-inosyl-L-homocysteine, respectively. Is also able to deaminate adenosine. This chain is 5-methylthioadenosine/S-adenosylhomocysteine deaminase, found in Pyrococcus furiosus (strain ATCC 43587 / DSM 3638 / JCM 8422 / Vc1).